An 888-amino-acid polypeptide reads, in one-letter code: Molybdenum cofactor sulfurase (888 aa).

The residue at position 34 (serine 34) is a Phosphoserine. N6-(pyridoxal phosphate)lysine is present on lysine 264. Residue cysteine 424 is part of the active site. Serine 528 and serine 530 each carry phosphoserine. Positions 706–867 (KQSSNSQRNA…LSVGSQVLPV (162 aa)) constitute an MOSC domain.

It belongs to the class-V pyridoxal-phosphate-dependent aminotransferase family. MOCOS subfamily. Pyridoxal 5'-phosphate serves as cofactor.

It carries out the reaction Mo-molybdopterin + L-cysteine + AH2 = thio-Mo-molybdopterin + L-alanine + A + H2O. It participates in cofactor biosynthesis; molybdopterin biosynthesis. Its function is as follows. Sulfurates the molybdenum cofactor. Sulfation of molybdenum is essential for xanthine dehydrogenase (XDH) and aldehyde oxidase (ADO) enzymes in which molybdenum cofactor is liganded by 1 oxygen and 1 sulfur atom in active form. In vitro, the C-terminal domain is able to reduce N-hydroxylated prodrugs, such as benzamidoxime. The protein is Molybdenum cofactor sulfurase of Homo sapiens (Human).